Reading from the N-terminus, the 342-residue chain is Ribosomal RNA small subunit methyltransferase C (342 aa).

It belongs to the methyltransferase superfamily. RsmC family. As to quaternary structure, monomer.

The protein localises to the cytoplasm. The enzyme catalyses guanosine(1207) in 16S rRNA + S-adenosyl-L-methionine = N(2)-methylguanosine(1207) in 16S rRNA + S-adenosyl-L-homocysteine + H(+). Functionally, specifically methylates the guanine in position 1207 of 16S rRNA in the 30S particle. This Salmonella heidelberg (strain SL476) protein is Ribosomal RNA small subunit methyltransferase C.